A 471-amino-acid polypeptide reads, in one-letter code: MPTNIYVTEEELKKQEKIMKEIAEENKGKNLYYHIETYGCQMNVHDSEKLAGMLEKMGYKYTENLEQADVLLFNTCAVREHAEIRVLGRVSQMKELKARNPNLIIGVSGCMMQEKNVVEAIKEKYSYIDIVFGTHNIYKFPQLLWEALNSQDIVIDIIEDTKNVIEELPVKRDSNLKAWVNIIYGCNNFCTYCIVPYTRGREKSRKPEDIIAEVKELAQKGYKEITLLGQNVNSYGKDLDEDITFAKLLYKLNDIEGIERIRFMTSHPKDISDELIYAIRDLDKVCEHLHLPVQAGSNKILKKMNRKYTKEHYLEIIDKVRSNIPDIAITTDIIVGFPGETEEDFLETLDLVERVRFDAAYTFIYSKRAGTVAANMPDQVDDAVKHERLERLIELQNKISLEKSAELRGKIVEVLIEGISKRDSNKLTSRTRTNKVVHFVGDESLIGKLANVKITETKAWTMQGELVEVIR.

The region spanning 31 to 149 is the MTTase N-terminal domain; that stretch reads LYYHIETYGC…FPQLLWEALN (119 aa). [4Fe-4S] cluster is bound by residues cysteine 40, cysteine 76, cysteine 110, cysteine 186, cysteine 190, and cysteine 193. Residues 172-402 enclose the Radical SAM core domain; the sequence is RDSNLKAWVN…IELQNKISLE (231 aa). The 64-residue stretch at 405–468 folds into the TRAM domain; that stretch reads AELRGKIVEV…AWTMQGELVE (64 aa).

It belongs to the methylthiotransferase family. MiaB subfamily. Monomer. The cofactor is [4Fe-4S] cluster.

The protein resides in the cytoplasm. The catalysed reaction is N(6)-dimethylallyladenosine(37) in tRNA + (sulfur carrier)-SH + AH2 + 2 S-adenosyl-L-methionine = 2-methylsulfanyl-N(6)-dimethylallyladenosine(37) in tRNA + (sulfur carrier)-H + 5'-deoxyadenosine + L-methionine + A + S-adenosyl-L-homocysteine + 2 H(+). Catalyzes the methylthiolation of N6-(dimethylallyl)adenosine (i(6)A), leading to the formation of 2-methylthio-N6-(dimethylallyl)adenosine (ms(2)i(6)A) at position 37 in tRNAs that read codons beginning with uridine. The protein is tRNA-2-methylthio-N(6)-dimethylallyladenosine synthase of Thermoanaerobacter pseudethanolicus (strain ATCC 33223 / 39E) (Clostridium thermohydrosulfuricum).